Consider the following 596-residue polypeptide: Dihydroxy-acid dehydratase pbrD, mitochondrial (596 aa).

Residues 1 to 18 (MATSSIRSRALGLSRRAR) constitute a mitochondrion transit peptide. C84 contributes to the [2Fe-2S] cluster binding site. D116 contributes to the Mg(2+) binding site. Residue C157 coordinates [2Fe-2S] cluster. D158 is a Mg(2+) binding site. C230 lines the [2Fe-2S] cluster pocket. A Mg(2+)-binding site is contributed by E483. S509 acts as the Proton acceptor in catalysis.

The protein belongs to the IlvD/Edd family. The cofactor is [2Fe-2S] cluster. Mg(2+) is required as a cofactor.

The protein localises to the mitochondrion. The catalysed reaction is (2R)-2,3-dihydroxy-3-methylbutanoate = 3-methyl-2-oxobutanoate + H2O. The enzyme catalyses (2R,3R)-2,3-dihydroxy-3-methylpentanoate = (S)-3-methyl-2-oxopentanoate + H2O. The protein operates within amino-acid biosynthesis; L-isoleucine biosynthesis; L-isoleucine from 2-oxobutanoate: step 3/4. It functions in the pathway amino-acid biosynthesis; L-valine biosynthesis; L-valine from pyruvate: step 3/4. DHAD activity is not inhibited by the dihydroxyacid dehydratase inhibitor aspterric acid (AA). In terms of biological role, dihydroxyacid dehydratase; part of the gene cluster that mediates the biosynthesis of the sesquiterpenoid aspterric acid (AA), an inhibitor of dihydroxy-acid dehydratase (DHAD) effective as an herbicide. Performs the third step in the common pathway leading to biosynthesis of branched-chain amino acids. Catalyzes the dehydration of (2R,3R)-2,3-dihydroxy-3-methylpentanoate (2,3-dihydroxy-3-methylvalerate) into 2-oxo-3-methylpentanoate (2-oxo-3-methylvalerate) and of (2R)-2,3-dihydroxy-3-methylbutanoate (2,3-dihydroxyisovalerate) into 2-oxo-3-methylbutanoate (2-oxoisovalerate), the penultimate precursor to L-isoleucine and L-valine, respectively. PbrD confers self-resistance in the presence of the dihydroxyacid dehydratase inhibitor aspterric acid (AA) produced by the ast cluster. In Penicillium brasilianum, this protein is Dihydroxy-acid dehydratase pbrD, mitochondrial.